Consider the following 174-residue polypeptide: Crossover junction endodeoxyribonuclease RuvC (174 aa).

Active-site residues include Asp-8, Glu-68, and Asp-140. The Mg(2+) site is built by Asp-8, Glu-68, and Asp-140.

The protein belongs to the RuvC family. In terms of assembly, homodimer which binds Holliday junction (HJ) DNA. The HJ becomes 2-fold symmetrical on binding to RuvC with unstacked arms; it has a different conformation from HJ DNA in complex with RuvA. In the full resolvosome a probable DNA-RuvA(4)-RuvB(12)-RuvC(2) complex forms which resolves the HJ. It depends on Mg(2+) as a cofactor.

It localises to the cytoplasm. It carries out the reaction Endonucleolytic cleavage at a junction such as a reciprocal single-stranded crossover between two homologous DNA duplexes (Holliday junction).. In terms of biological role, the RuvA-RuvB-RuvC complex processes Holliday junction (HJ) DNA during genetic recombination and DNA repair. Endonuclease that resolves HJ intermediates. Cleaves cruciform DNA by making single-stranded nicks across the HJ at symmetrical positions within the homologous arms, yielding a 5'-phosphate and a 3'-hydroxyl group; requires a central core of homology in the junction. The consensus cleavage sequence is 5'-(A/T)TT(C/G)-3'. Cleavage occurs on the 3'-side of the TT dinucleotide at the point of strand exchange. HJ branch migration catalyzed by RuvA-RuvB allows RuvC to scan DNA until it finds its consensus sequence, where it cleaves and resolves the cruciform DNA. The sequence is that of Crossover junction endodeoxyribonuclease RuvC from Legionella pneumophila (strain Paris).